We begin with the raw amino-acid sequence, 406 residues long: Lymphocyte transmembrane adapter 1 (406 aa).

The disordered stretch occupies residues 1–25; the sequence is MYTTPAPPEITRRSSEPSTQQGTLG. At 1–33 the chain is on the extracellular side; sequence MYTTPAPPEITRRSSEPSTQQGTLGSLEGEKGH. A helical; Signal-anchor for type III membrane protein transmembrane segment spans residues 34 to 54; sequence LLFPGFVVLVTIFLVVIVTCI. Residues 55–406 lie on the Cytoplasmic side of the membrane; the sequence is LWSRKKQKKR…LATETSGEEV (352 aa). The interval 109-131 is disordered; sequence ESLLSRASDSPEPEVPQASGSLQ. Residue Tyr-184 is modified to Phosphotyrosine. The segment at 219 to 258 is disordered; sequence AEGGHAGCGKATDRTGVWAPGLQGSNSLSEGDDSSQSSND. Over residues 242-258 the composition is skewed to low complexity; it reads GSNSLSEGDDSSQSSND. Residues Tyr-259, Tyr-285, and Tyr-352 each carry the phosphotyrosine modification. The segment at 358 to 406 is disordered; that stretch reads PELEGKDWKQGPGTWHPSDERTPSDQAGKFCEAVYPAGSLATETSGEEV.

When phosphorylated, interacts with GRB2, PIK3R1 and GRAP2. In terms of processing, phosphorylated on tyrosines upon TCR or BCR activation; which leads to the recruitment of GRB2, PIK3R1 and GRAP2.

It is found in the cell membrane. Its function is as follows. Negatively regulates TCR (T-cell antigen receptor)-mediated signaling in T-cells and BCR (B-cell antigen receptor)-mediated signaling in B-cells. In Rattus norvegicus (Rat), this protein is Lymphocyte transmembrane adapter 1 (Lax1).